We begin with the raw amino-acid sequence, 335 residues long: Dihydroorotate dehydrogenase (quinone) (335 aa).

FMN contacts are provided by residues 58–62 and threonine 82; that span reads AGADK. Substrate is bound at residue lysine 62. 107–111 provides a ligand contact to substrate; it reads NRNGF. 2 residues coordinate FMN: asparagine 135 and asparagine 168. Residue asparagine 168 participates in substrate binding. The active-site Nucleophile is the serine 171. Asparagine 173 is a binding site for substrate. FMN-binding residues include lysine 213 and glycine 241. Position 242 to 243 (242 to 243) interacts with substrate; the sequence is NT. Residues glycine 264, glycine 293, and 314–315 each bind FMN; that span reads YS.

The protein belongs to the dihydroorotate dehydrogenase family. Type 2 subfamily. Monomer. It depends on FMN as a cofactor.

It localises to the cell membrane. It catalyses the reaction (S)-dihydroorotate + a quinone = orotate + a quinol. It participates in pyrimidine metabolism; UMP biosynthesis via de novo pathway; orotate from (S)-dihydroorotate (quinone route): step 1/1. Functionally, catalyzes the conversion of dihydroorotate to orotate with quinone as electron acceptor. In Actinobacillus pleuropneumoniae serotype 7 (strain AP76), this protein is Dihydroorotate dehydrogenase (quinone).